A 146-amino-acid polypeptide reads, in one-letter code: Urease accessory protein UreE 1 (146 aa).

It belongs to the UreE family.

The protein localises to the cytoplasm. Involved in urease metallocenter assembly. Binds nickel. Probably functions as a nickel donor during metallocenter assembly. The polypeptide is Urease accessory protein UreE 1 (Pseudomonas syringae pv. syringae (strain B728a)).